The following is a 255-amino-acid chain: Methylthioribulose-1-phosphate dehydratase (255 aa).

Substrate is bound at residue Cys-111. Residues His-128 and His-130 each coordinate Zn(2+). Catalysis depends on Glu-157, which acts as the Proton donor/acceptor. His-213 is a Zn(2+) binding site.

It belongs to the aldolase class II family. MtnB subfamily. Zn(2+) is required as a cofactor.

The protein resides in the cytoplasm. It catalyses the reaction 5-(methylsulfanyl)-D-ribulose 1-phosphate = 5-methylsulfanyl-2,3-dioxopentyl phosphate + H2O. It functions in the pathway amino-acid biosynthesis; L-methionine biosynthesis via salvage pathway; L-methionine from S-methyl-5-thio-alpha-D-ribose 1-phosphate: step 2/6. Functionally, catalyzes the dehydration of methylthioribulose-1-phosphate (MTRu-1-P) into 2,3-diketo-5-methylthiopentyl-1-phosphate (DK-MTP-1-P). The sequence is that of Methylthioribulose-1-phosphate dehydratase from Talaromyces stipitatus (strain ATCC 10500 / CBS 375.48 / QM 6759 / NRRL 1006) (Penicillium stipitatum).